Here is a 209-residue protein sequence, read N- to C-terminus: Orotate phosphoribosyltransferase (209 aa).

5-phospho-alpha-D-ribose 1-diphosphate is bound by residues Arg-96, Lys-100, His-102, and 122-130 (EDLISTGGS). An orotate-binding site is contributed by Ser-126.

This sequence belongs to the purine/pyrimidine phosphoribosyltransferase family. PyrE subfamily. As to quaternary structure, homodimer. It depends on Mg(2+) as a cofactor.

It carries out the reaction orotidine 5'-phosphate + diphosphate = orotate + 5-phospho-alpha-D-ribose 1-diphosphate. Its pathway is pyrimidine metabolism; UMP biosynthesis via de novo pathway; UMP from orotate: step 1/2. Functionally, catalyzes the transfer of a ribosyl phosphate group from 5-phosphoribose 1-diphosphate to orotate, leading to the formation of orotidine monophosphate (OMP). This Streptococcus gordonii (strain Challis / ATCC 35105 / BCRC 15272 / CH1 / DL1 / V288) protein is Orotate phosphoribosyltransferase.